Reading from the N-terminus, the 189-residue chain is Acireductone dioxygenase 1 (189 aa).

Fe(2+) is bound by residues histidine 102, histidine 104, glutamate 108, and histidine 146. Histidine 102, histidine 104, glutamate 108, and histidine 146 together coordinate Ni(2+).

This sequence belongs to the acireductone dioxygenase (ARD) family. In terms of assembly, monomer. Fe(2+) is required as a cofactor. Requires Ni(2+) as cofactor.

The catalysed reaction is 1,2-dihydroxy-5-(methylsulfanyl)pent-1-en-3-one + O2 = 3-(methylsulfanyl)propanoate + CO + formate + 2 H(+). It catalyses the reaction 1,2-dihydroxy-5-(methylsulfanyl)pent-1-en-3-one + O2 = 4-methylsulfanyl-2-oxobutanoate + formate + 2 H(+). It participates in amino-acid biosynthesis; L-methionine biosynthesis via salvage pathway; L-methionine from S-methyl-5-thio-alpha-D-ribose 1-phosphate: step 5/6. Its function is as follows. Catalyzes 2 different reactions between oxygen and the acireductone 1,2-dihydroxy-3-keto-5-methylthiopentene (DHK-MTPene) depending upon the metal bound in the active site. Fe-containing acireductone dioxygenase (Fe-ARD) produces formate and 2-keto-4-methylthiobutyrate (KMTB), the alpha-ketoacid precursor of methionine in the methionine recycle pathway. Ni-containing acireductone dioxygenase (Ni-ARD) produces methylthiopropionate, carbon monoxide and formate, and does not lie on the methionine recycle pathway. The polypeptide is Acireductone dioxygenase 1 (Nocardia farcinica (strain IFM 10152)).